A 327-amino-acid polypeptide reads, in one-letter code: Ran-specific GTPase-activating protein 2 (327 aa).

Disordered regions lie at residues 1-96 and 109-205; these read MSET…KKED and GFGV…KQEV. The span at 24-83 shows a compositional bias: basic and acidic residues; that stretch reads PIDKLDGTPKRPREKDQDEQAEETSDKSEAPNKNDEEKKEEGKKDQEPSHKKIKVDDGKT. Thr31 bears the Phosphothreonine mark. The segment covering 122–133 has biased composition (polar residues); it reads ATTSTESLPASD. The segment covering 140–152 has biased composition (low complexity); sequence FAFGSGLSFGSGF. Composition is skewed to basic and acidic residues over residues 157-179 and 189-205; these read NKTENNSESEKKATDVDKDKVHS and EDTKDKPKPLKLQKQEV. Position 179 is a phosphoserine (Ser179). The 137-residue stretch at 191–327 folds into the RanBD1 domain; it reads TKDKPKPLKL…YNIIVKSVPK (137 aa).

As to quaternary structure, interacts with GSP1, XPO1 and SRM1.

Its subcellular location is the nucleus. Its function is as follows. Important for the export of protein containing nuclear export signal (NES) out of the nucleus. Stimulates the GTPase activity of GSP1. This Saccharomyces cerevisiae (strain ATCC 204508 / S288c) (Baker's yeast) protein is Ran-specific GTPase-activating protein 2 (YRB2).